Consider the following 620-residue polypeptide: MAU2 chromatid cohesion factor homolog (620 aa).

2 TPR repeats span residues 452-485 (GGFY…ANAE) and 492-525 (SCSL…ASKI).

The protein belongs to the SCC4/mau-2 family. In terms of assembly, interacts with Nipped-B to form the cohesin loading complex.

The protein localises to the nucleus. The protein resides in the nucleoplasm. In terms of biological role, required for association of the cohesin complex with chromatin during interphase. Plays a role in sister chromatid cohesion and normal progression through prometaphase. The chain is MAU2 chromatid cohesion factor homolog from Drosophila persimilis (Fruit fly).